The sequence spans 485 residues: Skb1 localization factor 1 (485 aa).

The sufficient for interaction with Skb1 stretch occupies residues 1–200; it reads MSSIIQNPIE…VDDSDLTPHT (200 aa). Disordered stretches follow at residues 117–230, 286–416, and 446–466; these read NAAN…MSRN, ETQH…LRRS, and TTQERKPVVKPDSIKTVKPEK. The segment covering 171–182 has biased composition (polar residues); the sequence is SRSSRYSKTSDL. Over residues 189 to 198 the composition is skewed to basic and acidic residues; the sequence is RFVDDSDLTP. 2 stretches are compositionally biased toward polar residues: residues 218–230 and 341–363; these read GRSSSPDQMMSRN and VGSSQPAEEFVGSSSSHGRQQDS. Ser222 bears the Phosphoserine mark. Over residues 371-393 the composition is skewed to basic and acidic residues; sequence SERSYRRVRDQYLSKPRLSDKNR. Positions 394-416 are enriched in polar residues; sequence YSTFSEFPGQGTPSASQSNLRRS. Residues 447 to 464 are compositionally biased toward basic and acidic residues; it reads TQERKPVVKPDSIKTVKP. The tract at residues 451–485 is required and sufficient for plasma membrane anchoring; lysine-rich, may bind to anionic lipids in the plasma membrane; that stretch reads KPVVKPDSIKTVKPEKKKSKGFFKKLMHKISHIFD. Ser458 is modified (phosphoserine).

In terms of assembly, interacts with Skb1.

It is found in the cell membrane. Functionally, acts as a membrane anchor for Skb1 in forming plasma membrane microdomains. Promotes mitotic entry by sequestering mitotic inhibitor Skb1 from its regulatory targets Cdr1 and Wee1. The protein is Skb1 localization factor 1 of Schizosaccharomyces pombe (strain 972 / ATCC 24843) (Fission yeast).